Here is a 401-residue protein sequence, read N- to C-terminus: Dual-specificity RNA methyltransferase RlmN (401 aa).

E114 serves as the catalytic Proton acceptor. The region spanning 120–365 is the Radical SAM core domain; it reads DKTRGTLCVS…TMVRRTRGDD (246 aa). A disulfide bridge links C127 with C370. [4Fe-4S] cluster contacts are provided by C134, C138, and C141. S-adenosyl-L-methionine is bound by residues 187 to 188, S219, 241 to 243, and N327; these read GE and SLH. C370 acts as the S-methylcysteine intermediate in catalysis.

The protein belongs to the radical SAM superfamily. RlmN family. [4Fe-4S] cluster is required as a cofactor.

Its subcellular location is the cytoplasm. It catalyses the reaction adenosine(2503) in 23S rRNA + 2 reduced [2Fe-2S]-[ferredoxin] + 2 S-adenosyl-L-methionine = 2-methyladenosine(2503) in 23S rRNA + 5'-deoxyadenosine + L-methionine + 2 oxidized [2Fe-2S]-[ferredoxin] + S-adenosyl-L-homocysteine. The catalysed reaction is adenosine(37) in tRNA + 2 reduced [2Fe-2S]-[ferredoxin] + 2 S-adenosyl-L-methionine = 2-methyladenosine(37) in tRNA + 5'-deoxyadenosine + L-methionine + 2 oxidized [2Fe-2S]-[ferredoxin] + S-adenosyl-L-homocysteine. Its function is as follows. Specifically methylates position 2 of adenine 2503 in 23S rRNA and position 2 of adenine 37 in tRNAs. m2A2503 modification seems to play a crucial role in the proofreading step occurring at the peptidyl transferase center and thus would serve to optimize ribosomal fidelity. The chain is Dual-specificity RNA methyltransferase RlmN from Stenotrophomonas maltophilia (strain R551-3).